The primary structure comprises 369 residues: Anhydro-N-acetylmuramic acid kinase (369 aa).

12 to 19 (GTSLDGVD) contributes to the ATP binding site.

The protein belongs to the anhydro-N-acetylmuramic acid kinase family.

The catalysed reaction is 1,6-anhydro-N-acetyl-beta-muramate + ATP + H2O = N-acetyl-D-muramate 6-phosphate + ADP + H(+). The protein operates within amino-sugar metabolism; 1,6-anhydro-N-acetylmuramate degradation. Its pathway is cell wall biogenesis; peptidoglycan recycling. Its function is as follows. Catalyzes the specific phosphorylation of 1,6-anhydro-N-acetylmuramic acid (anhMurNAc) with the simultaneous cleavage of the 1,6-anhydro ring, generating MurNAc-6-P. Is required for the utilization of anhMurNAc either imported from the medium or derived from its own cell wall murein, and thus plays a role in cell wall recycling. The polypeptide is Anhydro-N-acetylmuramic acid kinase (Escherichia coli O139:H28 (strain E24377A / ETEC)).